The following is a 295-amino-acid chain: Probable porphobilinogen deaminase (295 aa).

Cys234 is subject to S-(dipyrrolylmethanemethyl)cysteine.

Belongs to the HMBS family. Requires dipyrromethane as cofactor.

The catalysed reaction is 4 porphobilinogen + H2O = hydroxymethylbilane + 4 NH4(+). The protein operates within porphyrin-containing compound metabolism; protoporphyrin-IX biosynthesis; coproporphyrinogen-III from 5-aminolevulinate: step 2/4. Tetrapolymerization of the monopyrrole PBG into the hydroxymethylbilane pre-uroporphyrinogen in several discrete steps. The sequence is that of Probable porphobilinogen deaminase (hemC) from Thermoplasma acidophilum (strain ATCC 25905 / DSM 1728 / JCM 9062 / NBRC 15155 / AMRC-C165).